The sequence spans 601 residues: Glutathione-regulated potassium-efflux system protein KefB (601 aa).

The next 13 helical transmembrane spans lie at 4-24 (SDFL…VPLA), 29-49 (IGAV…GLGF), 55-75 (EILH…GLEL), 87-107 (IFGV…GLLM), 115-135 (AAVV…LQLM), 152-172 (VLLF…LLAG), 177-197 (HFDW…LIGG), 207-227 (FIAA…LVLG), 230-250 (LFMD…GVLL), 268-288 (GLLL…GVLY), 291-311 (LLWV…VLYL), 324-344 (MQFA…FSSA), and 356-376 (ALLL…MKLV). Residues 400-519 (KPQVIVVGFG…AGVTQFSRET (120 aa)) form the RCK N-terminal domain.

It belongs to the monovalent cation:proton antiporter 2 (CPA2) transporter (TC 2.A.37) family. KefB subfamily. As to quaternary structure, interacts with the regulatory subunit KefG.

Its subcellular location is the cell inner membrane. Functionally, pore-forming subunit of a potassium efflux system that confers protection against electrophiles. Catalyzes K(+)/H(+) antiport. The sequence is that of Glutathione-regulated potassium-efflux system protein KefB from Escherichia coli O127:H6 (strain E2348/69 / EPEC).